A 193-amino-acid polypeptide reads, in one-letter code: Peptide deformylase (193 aa).

Fe cation is bound by residues C111 and H155. Residue E156 is part of the active site. H159 serves as a coordination point for Fe cation.

The protein belongs to the polypeptide deformylase family. Fe(2+) serves as cofactor.

The catalysed reaction is N-terminal N-formyl-L-methionyl-[peptide] + H2O = N-terminal L-methionyl-[peptide] + formate. Functionally, removes the formyl group from the N-terminal Met of newly synthesized proteins. Requires at least a dipeptide for an efficient rate of reaction. N-terminal L-methionine is a prerequisite for activity but the enzyme has broad specificity at other positions. This chain is Peptide deformylase, found in Mycoplasma genitalium (strain ATCC 33530 / DSM 19775 / NCTC 10195 / G37) (Mycoplasmoides genitalium).